Here is a 170-residue protein sequence, read N- to C-terminus: Adenine phosphoribosyltransferase (170 aa).

Belongs to the purine/pyrimidine phosphoribosyltransferase family. In terms of assembly, homodimer.

The protein localises to the cytoplasm. It catalyses the reaction AMP + diphosphate = 5-phospho-alpha-D-ribose 1-diphosphate + adenine. The protein operates within purine metabolism; AMP biosynthesis via salvage pathway; AMP from adenine: step 1/1. Functionally, catalyzes a salvage reaction resulting in the formation of AMP, that is energically less costly than de novo synthesis. The sequence is that of Adenine phosphoribosyltransferase from Fervidobacterium nodosum (strain ATCC 35602 / DSM 5306 / Rt17-B1).